A 574-amino-acid chain; its full sequence is FAD-linked oxidoreductase penH (574 aa).

The first 25 residues, 1–25 (MLPRALTLSALLALLLAIYLALAPA), serve as a signal peptide directing secretion. N-linked (GlcNAc...) asparagine glycosylation is found at asparagine 48, asparagine 107, asparagine 193, asparagine 368, and asparagine 385. The 185-residue stretch at 121–305 (HQGRIPLYAA…VRVTMRTYPD (185 aa)) folds into the FAD-binding PCMH-type domain.

This sequence belongs to the oxygen-dependent FAD-linked oxidoreductase family. Requires FAD as cofactor.

The enzyme catalyses peniprequinolone + A = yaequinolone E + AH2. It participates in secondary metabolite biosynthesis. The protein operates within alkaloid biosynthesis. It functions in the pathway mycotoxin biosynthesis. FAD-linked oxidoreductase; part of the gene cluster that mediates the biosynthesis of penigequinolones, potent insecticidal alkaloids that contain a highly modified 10-carbon prenyl group. The first stage is catalyzed by the nonribosomal peptide synthetase penN that condenses anthranilic acid and O-methyl-L-tyrosine to produce 4'-methoxycyclopeptin. 4'-methoxycyclopeptin is then converted to 4'-methoxydehydrocyclopeptin by the ketoglutarate-dependent dioxygenase penM through dehydrogenation to form a double bond between C-alpha and C-beta of the O-methyltyrosine side chain. PenM also converts its first product methoxydehydrocyclopeptin to 4'-methoxycyclopenin. The following conversion of 4'methoxycyclopenin into 4'-methoxyviridicatin is catalyzed by the cyclopenase penL. 4'-methoxyviridicatin is the precursor of quinolone natural products, and is further converted to quinolinone B. The prenyltransferase penI then catalyzes the canonical Friedel-Crafts alkylation of quinolinone B with dimethylallyl cation to yield dimethylallyl quinolone, which is subjected to FAD-dependent dehydrogenation by the FAD-linked oxidoreductase penH to yield conjugated aryl diene. The delta(3') double bond then serves as the site of the second alkylation with DMAPP catalyzed by the prenyltransferase penG to yield a carbenium ion intermediate, which can be attacked by H(2)O to yield a styrenyl quinolone containing a C3'-hydroxyprenyl chain, or undergo cyclization to yield yaequinolones J1 and J2. The conversion of the styrenyl quinolone into the tetrahydrofuran-containing yaequinolone C is performed by the FAD-dependent monooxygenase penE and involves epoxidation of the terminal C7'-C8' olefin, followed by epoxide ring opening initiated by the C3' hydroxyl group. The predicted cysteine hydrolase penJ acts as an epoxide hydrolase that enhances the rate of the 5-exo-tet cyclization step, increasing the yield of yaequinolone C. PenF catalyzes the cationic rearrangement of the epoxide formed by penE (before ring opening to produce yaequinolone C) into yaequinolone D. Finally, the short-chain dehydrogenase/reductase (SDR)-like reductase penD, catalyzes both the dehydration of yaequinolone D and the reduction of the resulting oxonium to yield penigequinolone. This chain is FAD-linked oxidoreductase penH, found in Penicillium thymicola.